Here is a 225-residue protein sequence, read N- to C-terminus: Pre-mRNA-splicing factor SPF27 (225 aa).

The stretch at 138-222 (SNDNLALMIE…QGDENKENIR (85 aa)) forms a coiled coil.

Belongs to the SPF27 family. Component of the pre-catalytic and catalytic spliceosome complexes. Component of the postcatalytic spliceosome P complex.

It localises to the nucleus. In terms of biological role, required for pre-mRNA splicing as component of the activated spliceosome. May have a scaffolding role in the spliceosome assembly as it contacts all other components of the core complex. This chain is Pre-mRNA-splicing factor SPF27 (bcas2), found in Danio rerio (Zebrafish).